Consider the following 75-residue polypeptide: Mating pheromone Er-10 (75 aa).

The signal sequence occupies residues 1 to 19; the sequence is MNKLAILAIIAMVLFSANA. A propeptide spanning residues 20–37 is cleaved from the precursor; sequence FRFQSRIRSNVEAKTETR. 3 disulfides stabilise this stretch: cysteine 40/cysteine 56, cysteine 47/cysteine 74, and cysteine 52/cysteine 64.

Homodimer.

Its subcellular location is the secreted. Functionally, mating ciliate pheromones (or gamones) are diffusible extracellular communication signals that distinguish different intraspecific classes of cells commonly referred to as 'mating types'. They prepare the latter for conjugation by changing their cell surface properties. The sequence is that of Mating pheromone Er-10 (MAT10) from Euplotes raikovi.